Here is a 68-residue protein sequence, read N- to C-terminus: Neuronal regeneration-related protein (68 aa).

As to quaternary structure, interacts with FLNA. Interacts with the latency-associated peptides (LAP) of TGFB1 and TGFB2; the interaction results in a decrease in TGFB autoinduction. In terms of processing, phosphorylated on Ser-59. Phosphorylation decreases stability and activity.

It is found in the cytoplasm. May have roles in neural function. Ectopic expression promotes axonal regeneration. Also augments motility of gliomas. May also have roles in cellular differentiation. Induces differentiation of fibroblast into myofibroblast and myofibroblast ameboid migration. Increases retinoic-acid regulation of lipid-droplet biogenesis. Down-regulates the expression of TGFB1 and TGFB2 but not of TGFB3. May play a role in the regulation of alveolar generation. The polypeptide is Neuronal regeneration-related protein (Nrep) (Rattus norvegicus (Rat)).